Consider the following 246-residue polypeptide: 3'(2'),5'-bisphosphate nucleotidase CysQ (246 aa).

Mg(2+)-binding residues include glutamate 64, aspartate 83, leucine 85, aspartate 86, and aspartate 205. Glutamate 64 lines the substrate pocket. Residues 85–88 (LDGT) and aspartate 205 each bind substrate.

It belongs to the inositol monophosphatase superfamily. CysQ family. It depends on Mg(2+) as a cofactor.

It is found in the cell inner membrane. The catalysed reaction is adenosine 3',5'-bisphosphate + H2O = AMP + phosphate. In terms of biological role, converts adenosine-3',5'-bisphosphate (PAP) to AMP. The protein is 3'(2'),5'-bisphosphate nucleotidase CysQ of Escherichia coli O157:H7.